The chain runs to 89 residues: Large ribosomal subunit protein bL27 (89 aa).

The interval 1-22 (MAHKKGASSSRNGRDSNAQRLG) is disordered. Residues 7 to 19 (ASSSRNGRDSNAQ) show a composition bias toward polar residues.

It belongs to the bacterial ribosomal protein bL27 family.

This chain is Large ribosomal subunit protein bL27, found in Cutibacterium acnes (strain DSM 16379 / KPA171202) (Propionibacterium acnes).